The chain runs to 84 residues: Exodeoxyribonuclease 7 small subunit (84 aa).

This sequence belongs to the XseB family. As to quaternary structure, heterooligomer composed of large and small subunits.

The protein resides in the cytoplasm. It carries out the reaction Exonucleolytic cleavage in either 5'- to 3'- or 3'- to 5'-direction to yield nucleoside 5'-phosphates.. Bidirectionally degrades single-stranded DNA into large acid-insoluble oligonucleotides, which are then degraded further into small acid-soluble oligonucleotides. The protein is Exodeoxyribonuclease 7 small subunit of Haemophilus influenzae (strain 86-028NP).